A 390-amino-acid chain; its full sequence is Stearoyl-[acyl-carrier-protein] 9-desaturase 5, chloroplastic (390 aa).

Residues 1 to 22 (MAFAASHTASPSSCGGVAQRRS) form a disordered region. The N-terminal 31 residues, 1-31 (MAFAASHTASPSSCGGVAQRRSNGMSPVVAM), are a transit peptide targeting the chloroplast. Fe cation is bound by residues Glu-132, Glu-170, His-173, Glu-223, Glu-256, and His-259.

The protein belongs to the fatty acid desaturase type 2 family. As to quaternary structure, homodimer. The cofactor is Fe(2+).

The protein localises to the plastid. It localises to the chloroplast. It carries out the reaction octadecanoyl-[ACP] + 2 reduced [2Fe-2S]-[ferredoxin] + O2 + 2 H(+) = (9Z)-octadecenoyl-[ACP] + 2 oxidized [2Fe-2S]-[ferredoxin] + 2 H2O. It participates in lipid metabolism; fatty acid metabolism. In terms of biological role, converts stearoyl-ACP to oleoyl-ACP by introduction of a cis double bond between carbons 9 and 10 of the acyl chain. This chain is Stearoyl-[acyl-carrier-protein] 9-desaturase 5, chloroplastic, found in Oryza sativa subsp. japonica (Rice).